A 374-amino-acid polypeptide reads, in one-letter code: All-trans-retinol dehydrogenase [NAD(+)] ADH7 (374 aa).

N-acetylmethionine is present on Met-1. Zn(2+) is bound by residues Cys-47, His-68, Cys-98, Cys-101, Cys-104, Cys-112, and Cys-174. NAD(+)-binding positions include 199 to 204, Asp-223, Lys-228, 292 to 294, and Arg-369; these read GLGGVG and VGA.

It belongs to the zinc-containing alcohol dehydrogenase family. Class-IV subfamily. As to quaternary structure, homodimer. Zn(2+) serves as cofactor. As to expression, preferentially expressed in stomach.

It localises to the cytoplasm. It carries out the reaction a primary alcohol + NAD(+) = an aldehyde + NADH + H(+). It catalyses the reaction 10-hydroxydecanoate + NAD(+) = 10-oxodecanoate + NADH + H(+). The catalysed reaction is all-trans-retinol + NAD(+) = all-trans-retinal + NADH + H(+). The enzyme catalyses 9-cis-retinol + NAD(+) = 9-cis-retinal + NADH + H(+). It carries out the reaction all-trans-3,4-didehydroretinol + NAD(+) = all-trans-3,4-didehydroretinal + NADH + H(+). It catalyses the reaction all-trans-4-hydroxyretinol + NAD(+) = all-trans-4-hydroxyretinal + NADH + H(+). The catalysed reaction is all-trans-4-oxoretinol + NAD(+) = all-trans-4-oxoretinal + NADH + H(+). The enzyme catalyses 12-hydroxydodecanoate + NAD(+) = 12-oxododecanoate + NADH + H(+). It carries out the reaction 16-hydroxyhexadecanoate + NAD(+) = 16-oxohexadecanoate + NADH + H(+). It catalyses the reaction hexan-1-ol + NAD(+) = hexanal + NADH + H(+). The catalysed reaction is (E)-hex-2-en-1-ol + NAD(+) = (E)-hex-2-enal + NADH + H(+). The enzyme catalyses (E)-4-hydroxynon-2-en-1-ol + NAD(+) = (E)-4-hydroxynon-2-enal + NADH + H(+). Retinol oxidation is inhibited by the detergent Tween 80. Ethanol inhibits both all-trans-retinol and 9-cis-retinol oxidation. 13-cis-retinol is an effective competitive inhibitor of the 9-cis-retinol oxidation. All-trans-retinoic acid is a powerful inhibitor of all-trans-retinol oxidation. 13-cis-retinoic acid is a powerful inhibitor of all-trans-retinol oxidation. Cimetidine and ranitidine inhibited ethanol oxidation. In terms of biological role, catalyzes the NAD-dependent oxidation of all-trans-retinol, alcohol, aldehyde and omega-hydroxy fatty acids and their derivatives. Oxidizes preferentially all trans-retinol, all-trans-4-hydroxyretinol, 9-cis-retinol, 2-hexenol, and long chain omega-hydroxy fatty acids such as juniperic acid. In vitro can also catalyze the NADH-dependent reduction of all-trans-retinal and aldehydes and their derivatives. Reduces preferentially all trans-retinal, all-trans-4-oxoretinal and hexanal. Catalyzes in the oxidative direction with higher efficiency. Therefore may participate in retinoid metabolism, fatty acid omega-oxidation, and elimination of cytotoxic aldehydes produced by lipid peroxidation. The sequence is that of All-trans-retinol dehydrogenase [NAD(+)] ADH7 (Adh7) from Rattus norvegicus (Rat).